The primary structure comprises 558 residues: Acylase ACY 1 proenzyme (558 aa).

The active-site Nucleophile is Thr-368.

It belongs to the gamma-glutamyltransferase family. In terms of assembly, dimer of two non-identical chains processed from the same precursor.

The catalysed reaction is (7R)-7-(4-carboxybutanamido)cephalosporanate + H2O = (7R)-7-aminocephalosporanate + glutarate. It carries out the reaction an N-terminal (5-L-glutamyl)-[peptide] + an alpha-amino acid = 5-L-glutamyl amino acid + an N-terminal L-alpha-aminoacyl-[peptide]. The enzyme catalyses glutathione + H2O = L-cysteinylglycine + L-glutamate. It catalyses the reaction an S-substituted glutathione + H2O = an S-substituted L-cysteinylglycine + L-glutamate. Functionally, besides the cephalosporin acylase I activity which converts GL-7ACA into 7-ACA; this enzyme displays some gamma glutamyltranspeptidase activity. In Pseudomonas sp. (strain SE83), this protein is Acylase ACY 1 proenzyme (acyI).